The primary structure comprises 864 residues: Microtubule-associated protein TORTIFOLIA1 (864 aa).

The interval 1–26 (MSTPTTSGSAAKPTRPARSSSLATRS) is disordered. A compositionally biased stretch (polar residues) spans 17–26 (ARSSSLATRS). HEAT repeat units follow at residues 76–113 (ETLP…LHCD), 117–154 (AHLT…IYLK), 167–204 (LAVG…SAAS), 208–245 (TSFQ…VGAI), and 248–285 (QSLE…HSSG). Residues 329–353 (DGASDDSKLSASEQLGSEKNGEKRS) are disordered. A Phosphoserine modification is found at serine 414. The interval 426–504 (NDEEESGLDD…QSEGSFTSNR (79 aa)) is disordered. A compositionally biased stretch (polar residues) spans 439–448 (MGSSNRLKNT). A compositionally biased stretch (basic and acidic residues) spans 449–459 (QADDKQVKGRF). Over residues 489–504 (VSNTDNQSEGSFTSNR) the composition is skewed to polar residues. Residues 508–561 (SAIQRQLLQLERQQTNLMNMLQEFIGGSHDSMVTLEGRVRGLERIVEDMARDLS) adopt a coiled-coil conformation. The disordered stretch occupies residues 615 to 670 (DDWFIPPHAASRNGQAGPRRSPRSEQYENEHMGNGRRGWDNKASGTIRFGEGPSAR). Basic and acidic residues predominate over residues 636–654 (PRSEQYENEHMGNGRRGWD).

As to quaternary structure, interacts with WAV3. In terms of tissue distribution, expressed in roots, hypocotyls, stems, flowers, siliques, inflorescences, petioles, cotyledons, and leaves. Particularly present in root tips and shoot meristems.

The protein localises to the cytoplasm. It is found in the cytoskeleton. Plant-specific microtubule-associated protein (MAP) that regulates the orientation of cortical microtubules and the direction of organ growth. Determines microtubule organization by modulating microtubule severing. This Arabidopsis thaliana (Mouse-ear cress) protein is Microtubule-associated protein TORTIFOLIA1.